The following is a 431-amino-acid chain: Histidine--tRNA ligase (431 aa).

The protein belongs to the class-II aminoacyl-tRNA synthetase family. As to quaternary structure, homodimer.

It localises to the cytoplasm. It carries out the reaction tRNA(His) + L-histidine + ATP = L-histidyl-tRNA(His) + AMP + diphosphate + H(+). This chain is Histidine--tRNA ligase, found in Neisseria meningitidis serogroup B (strain ATCC BAA-335 / MC58).